Consider the following 143-residue polypeptide: Large ribosomal subunit protein uL11 (143 aa).

Belongs to the universal ribosomal protein uL11 family. In terms of assembly, part of the ribosomal stalk of the 50S ribosomal subunit. Interacts with L10 and the large rRNA to form the base of the stalk. L10 forms an elongated spine to which L12 dimers bind in a sequential fashion forming a multimeric L10(L12)X complex. One or more lysine residues are methylated.

Functionally, forms part of the ribosomal stalk which helps the ribosome interact with GTP-bound translation factors. The protein is Large ribosomal subunit protein uL11 of Pseudomonas savastanoi pv. phaseolicola (strain 1448A / Race 6) (Pseudomonas syringae pv. phaseolicola (strain 1448A / Race 6)).